The primary structure comprises 516 residues: Threonine synthase 2, chloroplastic (516 aa).

A chloroplast-targeting transit peptide spans 1–33 (MASFSLPHSATYFPSHSETSLKPHSAASFTVRC). Residues 1–37 (MASFSLPHSATYFPSHSETSLKPHSAASFTVRCTSAS) show a composition bias toward polar residues. A disordered region spans residues 1–55 (MASFSLPHSATYFPSHSETSLKPHSAASFTVRCTSASPAVPPQTPQKPRRSPDEN). S-adenosyl-L-methionine-binding positions include 133–135 (PYG), 156–158 (SAF), Asn163, Leu164, Lys172, and Asn178. An N6-(pyridoxal phosphate)lysine modification is found at Lys194. Pyridoxal 5'-phosphate contacts are provided by residues 326–330 (GNLGN) and Thr464.

It belongs to the threonine synthase family. As to quaternary structure, homodimer. It depends on pyridoxal 5'-phosphate as a cofactor.

The protein localises to the plastid. It localises to the chloroplast. It carries out the reaction O-phospho-L-homoserine + H2O = L-threonine + phosphate. The protein operates within amino-acid biosynthesis; L-threonine biosynthesis; L-threonine from L-aspartate: step 5/5. Its activity is regulated as follows. Allosterically activated by S-adenosyl-methionine (SAM). Functionally, catalyzes the gamma-elimination of phosphate from L-phosphohomoserine and the beta-addition of water to produce L-threonine. This Arabidopsis thaliana (Mouse-ear cress) protein is Threonine synthase 2, chloroplastic (TS2).